A 207-amino-acid chain; its full sequence is Large ribosomal subunit protein bL25 (207 aa).

The tract at residues 171-207 (ESVVTVEVPEDATESTTAPEAAAAPADAAAAPAADAK) is disordered. The span at 184-207 (ESTTAPEAAAAPADAAAAPAADAK) shows a compositional bias: low complexity.

This sequence belongs to the bacterial ribosomal protein bL25 family. CTC subfamily. As to quaternary structure, part of the 50S ribosomal subunit; part of the 5S rRNA/L5/L18/L25 subcomplex. Contacts the 5S rRNA. Binds to the 5S rRNA independently of L5 and L18.

In terms of biological role, this is one of the proteins that binds to the 5S RNA in the ribosome where it forms part of the central protuberance. In Bifidobacterium longum subsp. infantis (strain ATCC 15697 / DSM 20088 / JCM 1222 / NCTC 11817 / S12), this protein is Large ribosomal subunit protein bL25.